A 274-amino-acid polypeptide reads, in one-letter code: Methionine-binding lipoprotein MetQ (274 aa).

Residues 1 to 19 form the signal peptide; it reads MKKLFLGALLLVFAGVMAA. C20 is lipidated: N-palmitoyl cysteine. C20 carries S-diacylglycerol cysteine lipidation.

This sequence belongs to the NlpA lipoprotein family. In terms of assembly, the complex is composed of two ATP-binding proteins (MetN), two transmembrane proteins (MetP) and a solute-binding protein (metQ).

It localises to the cell membrane. Part of the ABC transporter complex MetNPQ involved in methionine import. Binds the methionine and transfers it to the membrane-bound permease. It has also been shown to be involved in methionine sulfoxide transport. The protein is Methionine-binding lipoprotein MetQ (metQ) of Bacillus subtilis (strain 168).